We begin with the raw amino-acid sequence, 364 residues long: Chorismate synthase (364 aa).

An NADP(+)-binding site is contributed by Arg48. FMN contacts are provided by residues 131-133 (RAS), 243-244 (NA), Gly288, 303-307 (KPTSS), and Arg329.

It belongs to the chorismate synthase family. Homotetramer. It depends on FMNH2 as a cofactor.

It carries out the reaction 5-O-(1-carboxyvinyl)-3-phosphoshikimate = chorismate + phosphate. It functions in the pathway metabolic intermediate biosynthesis; chorismate biosynthesis; chorismate from D-erythrose 4-phosphate and phosphoenolpyruvate: step 7/7. Catalyzes the anti-1,4-elimination of the C-3 phosphate and the C-6 proR hydrogen from 5-enolpyruvylshikimate-3-phosphate (EPSP) to yield chorismate, which is the branch point compound that serves as the starting substrate for the three terminal pathways of aromatic amino acid biosynthesis. This reaction introduces a second double bond into the aromatic ring system. This Bartonella bacilliformis (strain ATCC 35685 / KC583 / Herrer 020/F12,63) protein is Chorismate synthase.